A 436-amino-acid polypeptide reads, in one-letter code: MANIFEVPQPDNDLLEKAEKVRLASIKISQTENKNRIKALNFMADYLEKNSKEILEANNADYSSAEKKGISKALLSRLKLSRAKLNAGIEGVRKVGDLADPVNQVQIKKELSKGLILERKTVPIGVLGIIFESRPDAVMQISSLAIRSGNGVMLKGGSEANLTNTSIVKALQEGLNESGLDRNAICLLTSRKDSMAMLNLEKYINLIIPRGSNELVKFIQENTRIPVLGHADGICHLFIDIEANLEMALSVALDSKIQYPAACNAIETLLVHKDIAPAFLEKAIPLFNSNDVKLIGDNRSVELGLKYEASLQDWKTEYLDLILSIKIVNNVEEAITHIQKYSSKHTDGIITENSNTANKFMNVVDSSGVFHNCSTRFADGFRYGFGAEVGISTQTLPPRGPVGLEGLVTYKYFLKGGGHIVDDFSSGKAIYTHKDL.

It belongs to the gamma-glutamyl phosphate reductase family.

Its subcellular location is the cytoplasm. The enzyme catalyses L-glutamate 5-semialdehyde + phosphate + NADP(+) = L-glutamyl 5-phosphate + NADPH + H(+). It participates in amino-acid biosynthesis; L-proline biosynthesis; L-glutamate 5-semialdehyde from L-glutamate: step 2/2. In terms of biological role, catalyzes the NADPH-dependent reduction of L-glutamate 5-phosphate into L-glutamate 5-semialdehyde and phosphate. The product spontaneously undergoes cyclization to form 1-pyrroline-5-carboxylate. This chain is Gamma-glutamyl phosphate reductase, found in Prochlorococcus marinus (strain MIT 9215).